We begin with the raw amino-acid sequence, 971 residues long: Nuclear factor NF-kappa-B p110 subunit (971 aa).

Residues 23-41 show a composition bias toward low complexity; that stretch reads STSGYSSSTSPNSTNRSFS. Positions 23 to 46 are disordered; it reads STSGYSSSTSPNSTNRSFSPAHSP. The RHD domain occupies 147–339; it reads KHVPQLRIVE…NAINNRKSAQ (193 aa). At serine 431 the chain carries Phosphoserine; by PKA. The Nuclear localization signal motif lies at 452-457; that stretch reads SRKRRR. The disordered stretch occupies residues 453–496; the sequence is RKRRRTGSSANSSSSGTESSNNSLDLPKTLGLAQPPNGLPNLSQ. Over residues 460-475 the composition is skewed to low complexity; sequence SSANSSSSGTESSNNS. Residue threonine 620 is modified to Phosphothreonine. Residue tyrosine 626 is modified to Phosphotyrosine. ANK repeat units lie at residues 640–669, 673–702, 710–740, 745–775, and 783–812; these read DGDS…NPNL, AGNT…TVQL, DGLT…SISV, DGNN…NLTD, and AGHT…EKGE. Positions 826–877 are disordered; sequence IDSSSDESSDAGQLEIKSEEMDIETKDEDSVELDLSSGPRRQKDESSRDTEM. Positions 866 to 877 are enriched in basic and acidic residues; the sequence is RQKDESSRDTEM. Position 950 is a phosphoserine (serine 950).

Rel-p68 subunit interacts with Dredd. Interacts with DMAP1. Interacts with akirin; interaction is immune stimulation-dependent; activates selected rel target gene promoters. In terms of processing, phosphorylated by lipopolysaccharide (LPS)-activated I-kappa-B kinase complex before being cleaved. Rel-p110 subunit is cleaved within seconds of an immune challenge into Rel-p49 subunit and Rel-p68 subunit. Rel-p110 subunit reappears after 45 minutes.

The protein resides in the nucleus. It localises to the cytoplasm. Its function is as follows. Transcription factor that plays a key role in the humoral immune response as part of the peptidoglycan recognition protein (IMD) signaling pathway. Rel-p68 subunit translocates to the nucleus where it binds to the promoter of the Cecropin A1 gene and probably other antimicrobial peptide genes. I-kappa-B kinase complex (IKKbeta and key) and PGRP-LC are essential signaling components in transmitting the lipopolysaccharide (LPS) signal leading to cact degradation for NF-kappa-B (rel) activation. Part of a Toll-related receptor pathway that functions in the apoptosis of unfit cells during cell competition. Also part of some antiviral immunity: activated downstream of Sting signaling, which detects double-stranded RNA (dsRNA) from viruses, and promotes expression of antiviral effector genes. May be part of a NF-kappa-B and Tollo signaling cascade that regulates development of the peripheral nervous system. Possibly post-transcriptionally regulates the neuron-specific genes sc and ase, by promoting the rapid turnover of their transcripts in the wing imaginal disk. This Drosophila melanogaster (Fruit fly) protein is Nuclear factor NF-kappa-B p110 subunit.